The primary structure comprises 109 residues: Large ribosomal subunit protein uL24 (109 aa).

A disordered region spans residues 1 to 24 (MANVTTDIKRNDTVAVTSGKDKGK).

This sequence belongs to the universal ribosomal protein uL24 family. Part of the 50S ribosomal subunit.

Its function is as follows. One of two assembly initiator proteins, it binds directly to the 5'-end of the 23S rRNA, where it nucleates assembly of the 50S subunit. In terms of biological role, one of the proteins that surrounds the polypeptide exit tunnel on the outside of the subunit. This chain is Large ribosomal subunit protein uL24, found in Koribacter versatilis (strain Ellin345).